A 249-amino-acid polypeptide reads, in one-letter code: Sugar fermentation stimulation protein homolog (249 aa).

The protein belongs to the SfsA family.

The sequence is that of Sugar fermentation stimulation protein homolog from Prochlorococcus marinus (strain MIT 9515).